The sequence spans 295 residues: Indole-3-glycerol phosphate synthase (295 aa).

This sequence belongs to the TrpC family.

It carries out the reaction 1-(2-carboxyphenylamino)-1-deoxy-D-ribulose 5-phosphate + H(+) = (1S,2R)-1-C-(indol-3-yl)glycerol 3-phosphate + CO2 + H2O. It functions in the pathway amino-acid biosynthesis; L-tryptophan biosynthesis; L-tryptophan from chorismate: step 4/5. The polypeptide is Indole-3-glycerol phosphate synthase (Prochlorococcus marinus (strain NATL1A)).